Reading from the N-terminus, the 218-residue chain is Pyridoxine/pyridoxamine 5'-phosphate oxidase (218 aa).

Residues 14–17 and Lys-72 contribute to the substrate site; that span reads RREY. FMN is bound by residues 67–72, 82–83, Arg-88, Lys-89, and Gln-111; these read RIVLLK and YT. The substrate site is built by Tyr-129, Arg-133, and Ser-137. FMN is bound by residues 146 to 147 and Trp-191; that span reads QS. Residue 197 to 199 coordinates substrate; it reads RLH. Arg-201 is a binding site for FMN.

Belongs to the pyridoxamine 5'-phosphate oxidase family. In terms of assembly, homodimer. FMN serves as cofactor.

The catalysed reaction is pyridoxamine 5'-phosphate + O2 + H2O = pyridoxal 5'-phosphate + H2O2 + NH4(+). The enzyme catalyses pyridoxine 5'-phosphate + O2 = pyridoxal 5'-phosphate + H2O2. Its pathway is cofactor metabolism; pyridoxal 5'-phosphate salvage; pyridoxal 5'-phosphate from pyridoxamine 5'-phosphate: step 1/1. It functions in the pathway cofactor metabolism; pyridoxal 5'-phosphate salvage; pyridoxal 5'-phosphate from pyridoxine 5'-phosphate: step 1/1. In terms of biological role, catalyzes the oxidation of either pyridoxine 5'-phosphate (PNP) or pyridoxamine 5'-phosphate (PMP) into pyridoxal 5'-phosphate (PLP). This is Pyridoxine/pyridoxamine 5'-phosphate oxidase from Klebsiella pneumoniae subsp. pneumoniae (strain ATCC 700721 / MGH 78578).